Consider the following 47-residue polypeptide: Large ribosomal subunit protein bL32c (47 aa).

Belongs to the bacterial ribosomal protein bL32 family.

It is found in the plastid. The chain is Large ribosomal subunit protein bL32c (rpl32) from Prototheca wickerhamii.